The primary structure comprises 339 residues: MRVYYDRDADLNLIKGKNVVIVGYGSQGHAHALNLRDSGVKDIVIALREGSATAKKAEHEGFKVMNVADAAKWGDVVMMLTPDELQGDIYKESLEPNMKQGAALLFAHGLNVHFNLIEPRKDLDVLMVAPKGPGHTVRGEYLKGGGVPTLIAIAQDASGNAHDLGLSYASANGGGRAGIIETTFKEECETDLFGEQAVLCGGLVELIKAGFETLVEAGYAPEMAYFECLHEVKLIVDLIYEGGIANMNYSISNTAEYGEYVTGPRIVTPETKAEMKRVLNDIQSGIFTRNWMLENKVGQTSFKATRAKLAAHPIEEVGAKLRGMMPWISEKALVDKTKN.

Residues 1 to 182 (MRVYYDRDAD…GGGRAGIIET (182 aa)) enclose the KARI N-terminal Rossmann domain. NADP(+) is bound by residues 24-27 (YGSQ), arginine 48, serine 51, threonine 53, and 83-86 (DELQ). The active site involves histidine 108. Glycine 134 is an NADP(+) binding site. Residues 183–328 (TFKEECETDL…AKLRGMMPWI (146 aa)) form the KARI C-terminal knotted domain. Residues aspartate 191, glutamate 195, glutamate 227, and glutamate 231 each coordinate Mg(2+). Serine 252 lines the substrate pocket.

Belongs to the ketol-acid reductoisomerase family. Mg(2+) is required as a cofactor.

It carries out the reaction (2R)-2,3-dihydroxy-3-methylbutanoate + NADP(+) = (2S)-2-acetolactate + NADPH + H(+). It catalyses the reaction (2R,3R)-2,3-dihydroxy-3-methylpentanoate + NADP(+) = (S)-2-ethyl-2-hydroxy-3-oxobutanoate + NADPH + H(+). Its pathway is amino-acid biosynthesis; L-isoleucine biosynthesis; L-isoleucine from 2-oxobutanoate: step 2/4. The protein operates within amino-acid biosynthesis; L-valine biosynthesis; L-valine from pyruvate: step 2/4. Its function is as follows. Involved in the biosynthesis of branched-chain amino acids (BCAA). Catalyzes an alkyl-migration followed by a ketol-acid reduction of (S)-2-acetolactate (S2AL) to yield (R)-2,3-dihydroxy-isovalerate. In the isomerase reaction, S2AL is rearranged via a Mg-dependent methyl migration to produce 3-hydroxy-3-methyl-2-ketobutyrate (HMKB). In the reductase reaction, this 2-ketoacid undergoes a metal-dependent reduction by NADPH to yield (R)-2,3-dihydroxy-isovalerate. This Methylorubrum extorquens (strain CM4 / NCIMB 13688) (Methylobacterium extorquens) protein is Ketol-acid reductoisomerase (NADP(+)).